Consider the following 222-residue polypeptide: Cytochrome b6 (222 aa).

The helical transmembrane segment at 39–59 (IFYCLGGITLVCFIIQFATGF) threads the bilayer. Position 42 (Cys42) interacts with heme c. Heme b-binding residues include His93 and His107. 3 helical membrane passes run 97 to 117 (ASMM…TGGF), 123 to 143 (LTWI…VTGY), and 193 to 213 (LHTF…FLMI). Heme b contacts are provided by His194 and His209.

It belongs to the cytochrome b family. PetB subfamily. The 4 large subunits of the cytochrome b6-f complex are cytochrome b6, subunit IV (17 kDa polypeptide, PetD), cytochrome f and the Rieske protein, while the 4 small subunits are PetG, PetL, PetM and PetN. The complex functions as a dimer. Requires heme b as cofactor. Heme c is required as a cofactor.

It is found in the cellular thylakoid membrane. In terms of biological role, component of the cytochrome b6-f complex, which mediates electron transfer between photosystem II (PSII) and photosystem I (PSI), cyclic electron flow around PSI, and state transitions. The sequence is that of Cytochrome b6 from Prochlorothrix hollandica.